Consider the following 886-residue polypeptide: Protein translocase subunit SecA (886 aa).

ATP contacts are provided by residues Gln-81, Gly-99 to Thr-103, and Asp-489.

This sequence belongs to the SecA family.

The protein localises to the plastid. Its subcellular location is the chloroplast stroma. It is found in the chloroplast thylakoid membrane. It catalyses the reaction ATP + H2O + cellular proteinSide 1 = ADP + phosphate + cellular proteinSide 2.. Its function is as follows. Has a central role in coupling the hydrolysis of ATP to the transfer of proteins across the thylakoid membrane. The protein is Protein translocase subunit SecA of Phaeodactylum tricornutum (strain CCAP 1055/1).